The primary structure comprises 322 residues: MVTIDNSMTATQLNDLPQTAQLRKNAQPELGLVCITFDKKVRFRTMTRTRYLKLSLAQRESSLREIYLHNLQCLHDALTFCQENNLRLYRISSALFPLSDMEDQIGSNILEEISTDLGKIGERSQALNIRMVLHPDQYVVLSSDSPEIVQTSIKILERHARTFDLLGLPRSPWSLMNIHGGKSQRSEQLIKVISNLPENIKSRLTLENDEYAYSTEEIFNVCQKAQIPMVFDAHHQICHENLDSYDHPSVAAMFYAARETWTNPEWQLVHISNGEQAFNDRKHSNLITNMPNIYRQAPWIEVEAKHKEVAIAHLRSWWLMGQ.

This sequence belongs to the uve1/UvsE family.

Functionally, component in a DNA repair pathway. Removal of UV LIGHT damaged nucleotides. Recognizes pyrimidine dimers and cleave a phosphodiester bond immediately 5' to the lesion. In Nostoc sp. (strain PCC 7120 / SAG 25.82 / UTEX 2576), this protein is UV DNA damage endonuclease.